Here is a 236-residue protein sequence, read N- to C-terminus: Small ribosomal subunit protein uS3 (236 aa).

Residues 39-107 (IRSYVMEELK…ETSLNIVEIR (69 aa)) enclose the KH type-2 domain. The interval 214 to 236 (ASEHRATRNDNSSSSLNRRRESV) is disordered.

The protein belongs to the universal ribosomal protein uS3 family. Part of the 30S ribosomal subunit. Forms a tight complex with proteins S10 and S14.

Functionally, binds the lower part of the 30S subunit head. Binds mRNA in the 70S ribosome, positioning it for translation. This chain is Small ribosomal subunit protein uS3, found in Bartonella bacilliformis (strain ATCC 35685 / KC583 / Herrer 020/F12,63).